The sequence spans 37 residues: Photosystem II reaction center protein M (37 aa).

A helical transmembrane segment spans residues 7-27 (AFIAVLLFLAVPTAFLLIPYV).

It belongs to the PsbM family. As to quaternary structure, PSII is composed of 1 copy each of membrane proteins PsbA, PsbB, PsbC, PsbD, PsbE, PsbF, PsbH, PsbI, PsbJ, PsbK, PsbL, PsbM, PsbT, PsbX, PsbY, PsbZ, Psb30/Ycf12, at least 3 peripheral proteins of the oxygen-evolving complex and a large number of cofactors. It forms dimeric complexes.

The protein localises to the plastid. The protein resides in the chloroplast thylakoid membrane. Functionally, one of the components of the core complex of photosystem II (PSII). PSII is a light-driven water:plastoquinone oxidoreductase that uses light energy to abstract electrons from H(2)O, generating O(2) and a proton gradient subsequently used for ATP formation. It consists of a core antenna complex that captures photons, and an electron transfer chain that converts photonic excitation into a charge separation. This subunit is found at the monomer-monomer interface. In Pinus thunbergii (Japanese black pine), this protein is Photosystem II reaction center protein M.